A 432-amino-acid polypeptide reads, in one-letter code: Proline--tRNA ligase (432 aa).

The protein belongs to the class-II aminoacyl-tRNA synthetase family. ProS type 2 subfamily. Homodimer.

It is found in the cytoplasm. It catalyses the reaction tRNA(Pro) + L-proline + ATP = L-prolyl-tRNA(Pro) + AMP + diphosphate. In terms of biological role, catalyzes the attachment of proline to tRNA(Pro) in a two-step reaction: proline is first activated by ATP to form Pro-AMP and then transferred to the acceptor end of tRNA(Pro). In Rickettsia bellii (strain OSU 85-389), this protein is Proline--tRNA ligase.